Reading from the N-terminus, the 257-residue chain is Asnovolin H dehydrogenase nvfC (257 aa).

The helical transmembrane segment at 7–26 (YVLIITGSASGIGLATATIA) threads the bilayer. Ile-11 is a binding site for NADP(+). Residues Asn-57, Asn-92, and Asn-110 are each glycosylated (N-linked (GlcNAc...) asparagine). 4 residues coordinate NADP(+): Arg-119, Tyr-151, Lys-155, and Val-184. Tyr-151 serves as the catalytic Proton donor. Lys-155 serves as the catalytic Lowers pKa of active site Tyr.

This sequence belongs to the short-chain dehydrogenases/reductases (SDR) family.

The protein resides in the membrane. The enzyme catalyses asnovolin H + A = chermesin D + AH2. Its pathway is secondary metabolite biosynthesis; terpenoid biosynthesis. Short chain dehydrogenase; part of the gene cluster that mediates the biosynthesis of novofumigatonin, a heavily oxygenated meroterpenoid containing a unique orthoester moiety. The first step of the pathway is the synthesis of 3,5-dimethylorsellinic acid (DMOA) by the polyketide synthase nvfA via condensation of one acetyl-CoA starter unit with 3 malonyl-CoA units and 2 methylations. DMOA is then converted to farnesyl-DMOA by the farnesyltransferase nvfB. Epoxydation by FAD-dependent monooxygenase nvfK, followed by a protonation-initiated cyclization catalyzed by the terpene cyclase nvfL leads to the production of asnavolin H. The short chain dehydrogenase nvfC then as a 3-OH dehydrogenase of asnovolin H to yield chemesin D. There are two branches to synthesize asnovolin A from chemesin D. In one branch, chemesin D undergoes Baeyer-Villiger oxidation by nvfH, methylation by nvfJ, and enoyl reduction by the nvfM D enoylreductase that reduces the double bond between C-5'and C-6', to form respectively asnovolin I, asnovolin K, and asnovolin A. In the other branch, the methylation precedes the Baeyer-Villiger oxidation and the enoyl reduction to yield asnovolin A via the asnovolin J intermediate. Asnovolin A is further converted to fumigatonoid A by the Fe(II)/2-oxoglutarate-dependent dioxygenase nvfI that catalyzes an endoperoxidation reaction. The alpha/beta hydrolase nvfD then acts as an epimerase that converts fumigatonoid A to its C-5' epimer, which then undergoes spontaneous or nvfD-catalyzed lactonization. The following step utilizes the ketoreductase nvfG to produce fumigatonoid B. The dioxygenase nvfE further converts fumigatonoid B into fumigatonoid C. Finally the Fe(II)/2-oxoglutarate-dependent dioxygenase nvfF catalyzes two rounds of oxidation to transform fumigatonoid C into the end product, novofumigatonin A. This is Asnovolin H dehydrogenase nvfC from Aspergillus novofumigatus (strain IBT 16806).